The following is a 487-amino-acid chain: MIASHLLSPLIFLEQQPAYSSVVIGALVVCLVCLVWPTESAKRAPPAPNFGVPRIGDAAAFLADPVSFVQKATQKCGSIFQIKLLVANLVYLRGVKLNRMYTDVKEDTWSFGGGIGLFLRKIAKPGYFDHLRTLVNSLNRGVNRKAALEHYFQLIEEEAGKALQGWSQRGAVPVFEETSRFVHRVIVRCLMGQDFYDHRLDELYEILHHMEADIGHPFNLLLPDWIPHPAARRLEQNRDRFAQIFEQQVADRRRNPEIWRDSLDYISFTLEDPRTAHLEGYLPSHHTVLMFAAHTSTVASISWTILELLRNPDYLAQLRQSLAAHPDARKCPELLAGIKETGRHYSGVHMFRTTHRAVELEGGKYLVPPNWIVSISPYLTHHDPEIFHTPQHWIPERWLQPDDRMQNLNNPREAAFLQFGAGCHRCPGEALAGIIAQGLLATLVRRYDMVWGKEGPPTDLTALDFSKVGSPWLEGDASIAIRPKVAE.

A helical transmembrane segment spans residues 17 to 37 (PAYSSVVIGALVVCLVCLVWP). Residue Cys426 coordinates heme.

It belongs to the cytochrome P450 family. Requires heme as cofactor.

The protein resides in the membrane. It participates in secondary metabolite biosynthesis. Cytochrome P450 monooxygenase; part of the gene cluster that mediates the biosynthesis of pyranoviolin A, a pyranonigrin analog with a C-3 methoxy group. Initially, the PKS portion of pyvA synthesizes C-10 carbon chain from 5 molecules of malonyl-CoA, which is then condensed with the thiolation (T) domain-bound glycine activated by the adenylation (A) domain. The subsequent chain release by Dieckmann condensation (DKC) could be catalyzed by the TE domain present at the C-terminus of pyvA and/or the alpha/beta hydrolase pyvD, installing the tetramic acid moiety. The FAD-dependent monooxygenase pyvC next epoxidizes one of the olefins of the polyketide part, and the epoxide ring-opening induces the dihydro-gamma-pyrone ring formation. The cytochrome P450 monooxygeanse pyvB would be responsible for the 2 consecutive reactions, in which the dihydro-gamma-pyrone is oxidized to gamma-pyrone and C-7 is hydroxylated to yield pyranonigrin F. Finally, the O-methyltransferase pyvH methylates the C-3 hydroxy group to complete the biosynthesis. The chain is Cytochrome P450 monooxygenase pyvB from Aspergillus violaceofuscus (strain CBS 115571).